Reading from the N-terminus, the 95-residue chain is Small ribosomal subunit protein bS6 (95 aa).

It belongs to the bacterial ribosomal protein bS6 family.

Binds together with bS18 to 16S ribosomal RNA. The polypeptide is Small ribosomal subunit protein bS6 (rpsF) (Halalkalibacterium halodurans (strain ATCC BAA-125 / DSM 18197 / FERM 7344 / JCM 9153 / C-125) (Bacillus halodurans)).